Reading from the N-terminus, the 285-residue chain is Probable endonuclease 4 (285 aa).

Residues H69, H109, E145, D179, H182, H216, D229, H231, and E261 each contribute to the Zn(2+) site.

It belongs to the AP endonuclease 2 family. Zn(2+) is required as a cofactor.

It carries out the reaction Endonucleolytic cleavage to 5'-phosphooligonucleotide end-products.. Its function is as follows. Endonuclease IV plays a role in DNA repair. It cleaves phosphodiester bonds at apurinic or apyrimidinic (AP) sites, generating a 3'-hydroxyl group and a 5'-terminal sugar phosphate. The protein is Probable endonuclease 4 of Salmonella typhimurium (strain LT2 / SGSC1412 / ATCC 700720).